We begin with the raw amino-acid sequence, 432 residues long: Glutamyl-tRNA reductase (432 aa).

Residues 55 to 58, serine 114, 119 to 121, and glutamine 125 each bind substrate; these read TCNR and ETQ. The active-site Nucleophile is cysteine 56. Residue 194–199 participates in NADP(+) binding; sequence GAGEMI.

Belongs to the glutamyl-tRNA reductase family. In terms of assembly, homodimer.

The catalysed reaction is (S)-4-amino-5-oxopentanoate + tRNA(Glu) + NADP(+) = L-glutamyl-tRNA(Glu) + NADPH + H(+). It participates in porphyrin-containing compound metabolism; protoporphyrin-IX biosynthesis; 5-aminolevulinate from L-glutamyl-tRNA(Glu): step 1/2. Functionally, catalyzes the NADPH-dependent reduction of glutamyl-tRNA(Glu) to glutamate 1-semialdehyde (GSA). This chain is Glutamyl-tRNA reductase, found in Burkholderia orbicola (strain MC0-3).